The following is a 268-amino-acid chain: Putative S-adenosyl-L-methionine-dependent methyltransferase MAP_0663 (268 aa).

S-adenosyl-L-methionine is bound by residues Asp-124 and 153 to 154 (DL).

Belongs to the UPF0677 family.

Its function is as follows. Exhibits S-adenosyl-L-methionine-dependent methyltransferase activity. This Mycolicibacterium paratuberculosis (strain ATCC BAA-968 / K-10) (Mycobacterium paratuberculosis) protein is Putative S-adenosyl-L-methionine-dependent methyltransferase MAP_0663.